The chain runs to 288 residues: Bifunctional protein FolD 2 (288 aa).

Residues 166–168 (GRS) and Ser191 contribute to the NADP(+) site.

It belongs to the tetrahydrofolate dehydrogenase/cyclohydrolase family. As to quaternary structure, homodimer.

The enzyme catalyses (6R)-5,10-methylene-5,6,7,8-tetrahydrofolate + NADP(+) = (6R)-5,10-methenyltetrahydrofolate + NADPH. The catalysed reaction is (6R)-5,10-methenyltetrahydrofolate + H2O = (6R)-10-formyltetrahydrofolate + H(+). The protein operates within one-carbon metabolism; tetrahydrofolate interconversion. Catalyzes the oxidation of 5,10-methylenetetrahydrofolate to 5,10-methenyltetrahydrofolate and then the hydrolysis of 5,10-methenyltetrahydrofolate to 10-formyltetrahydrofolate. The polypeptide is Bifunctional protein FolD 2 (Frankia casuarinae (strain DSM 45818 / CECT 9043 / HFP020203 / CcI3)).